The following is a 374-amino-acid chain: Diels-Alderase fsa2 (374 aa).

Residues 1–216 (MSNVTVSAFT…MDRVWSPLSW (216 aa)) are beta-sandwich motif. The tract at residues 216–374 (WPQVMTESYY…VGTGGQCELS (159 aa)) is beta-barrel motif.

It belongs to the Diels-Alderase family.

The enzyme catalyses (5S)-3-[(2E,6R,8E,10E,12E)-2,6-dimethyltetradeca-2,8,10,12-tetraenoyl]-5-(hydroxymethyl)pyrrolidine-2,4-dione = trichosetin. It functions in the pathway mycotoxin biosynthesis. Diels-Alderase; part of the gene cluster that mediates the biosynthesis of the HIV-1 integrase inhibitor equisetin and of fusarisetin A, both trans-fused decalin-containing tetramic acids showing also antimicrobial activity. The PKS module of fsa1 together with the enoylreductase fsa3 catalyze the formation of the polyketide unit which is then conjugated to L-serine by the condensation domain of the fsa1 NRPS module. Activity of the Dieckmann cyclase domain (RED) results in release of the Dieckmann product intermediate. Diels-Alderase fsa2 is involved in endo-selective Diels-Alder cycloaddition to form the decalin ring, leading to the production of N-desmethylequisetin also called trichosetin. Subsequent N-methylation is carried out by fsa4 to give equisetin. The enzymatic gene responsible for the conversion of equisetin to fusarisetin A has not been identified yet and is probably located outside of the fsa cluster. The protein is Diels-Alderase fsa2 of Fusarium sp. (strain FN080326).